We begin with the raw amino-acid sequence, 518 residues long: Cytochrome P450 82E3 (518 aa).

A helical transmembrane segment spans residues 2 to 22 (VFPVEAIVGLVTFTFLFYFLW). A Glycyl lysine isopeptide (Lys-Gly) (interchain with G-Cter in ubiquitin) cross-link involves residue Lys254. A heme-binding site is contributed by Cys458.

This sequence belongs to the cytochrome P450 family. CYP82E2 subfamily. The cofactor is heme. Expressed at low levels in green leaves.

Its subcellular location is the membrane. It participates in alkaloid biosynthesis; nicotine biosynthesis. Its function is as follows. No nicotine N-demethylase activity. The polypeptide is Cytochrome P450 82E3 (Nicotiana tabacum (Common tobacco)).